The primary structure comprises 261 residues: 3-methyl-2-oxobutanoate hydroxymethyltransferase (261 aa).

Positions 47 and 86 each coordinate Mg(2+). 3-methyl-2-oxobutanoate contacts are provided by residues 47–48, Asp86, and Lys116; that span reads DS. Glu118 serves as a coordination point for Mg(2+). The active-site Proton acceptor is Glu186.

The protein belongs to the PanB family. In terms of assembly, homodecamer; pentamer of dimers. Mg(2+) is required as a cofactor.

It is found in the cytoplasm. It carries out the reaction 3-methyl-2-oxobutanoate + (6R)-5,10-methylene-5,6,7,8-tetrahydrofolate + H2O = 2-dehydropantoate + (6S)-5,6,7,8-tetrahydrofolate. The protein operates within cofactor biosynthesis; (R)-pantothenate biosynthesis; (R)-pantoate from 3-methyl-2-oxobutanoate: step 1/2. Its function is as follows. Catalyzes the reversible reaction in which hydroxymethyl group from 5,10-methylenetetrahydrofolate is transferred onto alpha-ketoisovalerate to form ketopantoate. The sequence is that of 3-methyl-2-oxobutanoate hydroxymethyltransferase from Thermosynechococcus vestitus (strain NIES-2133 / IAM M-273 / BP-1).